Consider the following 65-residue polypeptide: Adrenergic toxin rho-elapitoxin-Dp1a (65 aa).

Cystine bridges form between C3-C24, C17-C42, C46-C57, and C58-C63.

It belongs to the three-finger toxin family. Short-chain subfamily. Aminergic toxin sub-subfamily. Expressed by the venom gland.

It is found in the secreted. Functionally, this toxin shows activities on different G-protein coupled receptors. It is highly potent on various alpha-adrenoceptors (ADRA) (subnanomolar affinity for ADRA1A). Order of potency is the following: ADRA1A &gt; ADRA1B &gt; ADRA1D &gt; ADRA2C. It is also found to reversibly bind to muscarinic acetylcholine receptors (CHRM), but the affinity is much weaker (CHRM1 and CHRM2, Ki&gt;1 uM; CHRM3, Ki=140 nM; CHRM4, Ki=120 nM; CHRM5, Ki=350 nM). The chain is Adrenergic toxin rho-elapitoxin-Dp1a from Dendroaspis polylepis polylepis (Black mamba).